The following is a 172-amino-acid chain: MADARSLHRPLGFGVAAIVLLLDQISKWAIMGPVALRERGLIEITGFFDLRWVENYGVSMGFLIAGSDRERWLLVAGTALIAAGIVAWIWREKAKGDVVALGLVLGGAIGNIADRTRLGYVADFLDPHIGDWHPFLVFNVADAAITIGVLILVLRALLVREPKVPAENVDAV.

Transmembrane regions (helical) follow at residues 70 to 90 (ERWL…AWIW) and 94 to 114 (AKGD…NIAD). Catalysis depends on residues Asp123 and Asp142. A helical membrane pass occupies residues 134-154 (PFLVFNVADAAITIGVLILVL).

This sequence belongs to the peptidase A8 family.

The protein localises to the cell inner membrane. The enzyme catalyses Release of signal peptides from bacterial membrane prolipoproteins. Hydrolyzes -Xaa-Yaa-Zaa-|-(S,diacylglyceryl)Cys-, in which Xaa is hydrophobic (preferably Leu), and Yaa (Ala or Ser) and Zaa (Gly or Ala) have small, neutral side chains.. Its pathway is protein modification; lipoprotein biosynthesis (signal peptide cleavage). Its function is as follows. This protein specifically catalyzes the removal of signal peptides from prolipoproteins. The polypeptide is Lipoprotein signal peptidase (Rhizorhabdus wittichii (strain DSM 6014 / CCUG 31198 / JCM 15750 / NBRC 105917 / EY 4224 / RW1) (Sphingomonas wittichii)).